The sequence spans 494 residues: 1-aminocyclopropane-1-carboxylate synthase 2 (494 aa).

Lys-279 is subject to N6-(pyridoxal phosphate)lysine. Residues 474–494 are disordered; the sequence is NVLNSPHTMSPHSPLVRARTY. Positions 475-484 are enriched in polar residues; the sequence is VLNSPHTMSP.

This sequence belongs to the class-I pyridoxal-phosphate-dependent aminotransferase family. In terms of assembly, homodimer. The cofactor is pyridoxal 5'-phosphate.

It carries out the reaction S-adenosyl-L-methionine = 1-aminocyclopropane-1-carboxylate + S-methyl-5'-thioadenosine + H(+). It participates in alkene biosynthesis; ethylene biosynthesis via S-adenosyl-L-methionine; ethylene from S-adenosyl-L-methionine: step 1/2. In terms of biological role, catalyzes the formation of 1-aminocyclopropane-1-carboxylate, a direct precursor of ethylene in higher plants. In Cucurbita pepo (Vegetable marrow), this protein is 1-aminocyclopropane-1-carboxylate synthase 2 (ACS2).